The sequence spans 1901 residues: MIFQSFLLGNLVSLCMKIINSVVVVGLYYGFLTTFSIGPSYLFLLRALVMEEGTEKKVSATTGFITGQLMMFISIYYAPLHLALGRPHTITVLALPYLLFHFFWNNHKHFFDYGSTTRNSMRNLSIQCVFLNNLIFQLFNHFILPSSMLARLVNIYLFRCNSKILFVTSGFVGWLIGHILFMKWLGLVLVWIRQNHSIRSNKYIRSNKYLVLELRNSMARIFSILLFITCVYYLGRIPSPILTKKLKEASKTEERVESEEERDVEIETASEMKGTKQEQEGSTEEDPYPSPSLFSEERWDPDKIDETEEIRVNGKDKIKDKFHSHLTETGYNNINTSNSPIYDYEDSYLNNNNTGNTEIFKLQLLDKKNENKDLFWFQQPLVSLLFDYNRWNRPFRYIKNNRFEQAIRTEMSQYFFNTCKSDGKQRISFTYPPSLSTFWKMIKRRIPLLSLQKTLPNELDNQWISTNKEKSNNLNKEFLNRLEVLDKESFSLDILETRTRLCNDDTKKEYVPKMYDPLLNGPYRGTIKKKFSPSIINNTSLENLKERVRINRIHTIFLPNTDYQELEQKVDTVAKKPLSTEIDEFLTLINEFGNEPKSSLNLKDLSLFSDQEQGRVNSEKRTKFVKFVFNAIAPNGTTSEKKSIGIKEISKKIPRWSHKLITELEQQSGDYQEGVPLDHQIRSRKAKRVVIFTANNQNNDPDTKDTDTADQDQTKEVALIRYSQQPDFRRGIIKGSMRAQRRKTVIWKLFQANVHSPLFLDRITPPFLFSFDISGLIKPIFRNWSGKEGEFKILESREEQTKREEKKEKDKKGENKRKEKARIEIAEAWDTIPFAQIIRGYMLITQSILRKYIVLPSLIIAKNLGRMLVLQLPEWSEDLQEWNREMHIKCTYNGVQLSETEFPKNWLKDGIQIKILFPFCLKPWHISKLYSSRGELMKKKKQKDDFCFLTVWGMEAELPFGSPRKRPSFFEPIFKELEKKIGKFKKKYFITLKVFKGKIKLFRRISKETKKWLIKSSLFIKKMKKELSKVNPIVLFRLKEIDESNETKKEKDSLMSNQIINESFSQIESGNWPNSSLIESKMKDLTDRTSTIKNQIERITKEKKKVTPEIDISPNKTNNIKKFESPKKIFQILKRRNTRLIWKFHYFLKLFIQRLYIDLFLSIINIPRINTQLFLESTNKLIDKYISNNEINQEKINNQKKIHFISTIKKSLYNISKKNSHIFFDLSYLSQAYVFYKLSQPQVINLSKLRSVLQYNRTSFFLKTKIKDYFRTLGIFHSELKHKKLQSYRINQWKNWLRRHYQYDLSQIRWSRLMPQKWRNRVNQGCMAQNRNLNKWNSYEKDQLIHYKKENDSELYSLANQKDNFQKCYRYDLLAYKSINYEKKNDSFISRLPFQVNKNLEISSNSNTSKHNLFDMLGNLHINNYLRKGNILYIERNLDRKYFDWKIIHFSLRQKEDIEAWVKIDTNSNPNTKIGINNYQIIDKIDKKGFFYLTIHQNPENNQKNSKKAFFDWMGMNEKILNRPILNLEFWFFPEFVPLYNVYKIKPWIIPSKLLLLNLNTNENVSQNKNINKNQKQNFFLRSNKKIKNRIQEAKEPASQGEKERGSDIENKGNLGPVLSKHQNALKKDYAESDTKKGKKKKQYKSNTEAELDLFLKRYLLFQLRWNDALNQRMIENIKVYCLLLRLINPSKIAISSIQRREMSLDIMLIQKNLTLTELMKKGILIIEPIRLSVKNNGQFIMYQTIGISLVHKSKHQTNQRYPEQRYVDKKNFDEFILQPQTQRINTDKNHFDLLVPENILWSRRRRELRIRSLFNSLNWNGIDRNSVFCNENNVKNWSQFLDERKPLYKEKNELIKLKFFLWPNYRLEDLACMNRYWFDTNNGSRFSILRIHMYPQLKIN.

6 consecutive transmembrane segments (helical) span residues 18–38 (IINS…FSIG), 64–84 (FITG…HLAL), 87–107 (PHTI…WNNH), 124–144 (LSIQ…HFIL), 172–192 (VGWL…LVWI), and 221–241 (IFSI…PSPI). Disordered stretches follow at residues 248-299 (EASK…EERW), 797-817 (REEQ…ENKR), and 1591-1618 (IQEA…LGPV). The segment covering 256–268 (VESEEERDVEIET) has biased composition (acidic residues). The segment covering 1591–1611 (IQEAKEPASQGEKERGSDIEN) has biased composition (basic and acidic residues).

This sequence belongs to the TIC214 family. In terms of assembly, part of the Tic complex.

It localises to the plastid. Its subcellular location is the chloroplast inner membrane. Involved in protein precursor import into chloroplasts. May be part of an intermediate translocation complex acting as a protein-conducting channel at the inner envelope. In Nicotiana sylvestris (Wood tobacco), this protein is Protein TIC 214.